A 55-amino-acid polypeptide reads, in one-letter code: Large ribosomal subunit protein bL33 (55 aa).

Belongs to the bacterial ribosomal protein bL33 family.

This is Large ribosomal subunit protein bL33 from Rhodopseudomonas palustris (strain BisA53).